The sequence spans 182 residues: HGPRTase-like protein 1 (182 aa).

This sequence belongs to the purine/pyrimidine phosphoribosyltransferase family. Archaeal HPRT subfamily.

In terms of biological role, may catalyze a purine salvage reaction, the substrate is unknown. The chain is HGPRTase-like protein 1 from Haloarcula marismortui (strain ATCC 43049 / DSM 3752 / JCM 8966 / VKM B-1809) (Halobacterium marismortui).